The chain runs to 204 residues: Peptidyl-tRNA hydrolase 2 (204 aa).

Residue tyrosine 37 participates in tRNA binding. The active-site Proton acceptor is the histidine 42. Residues phenylalanine 86, asparagine 88, and asparagine 134 each coordinate tRNA.

The protein belongs to the PTH family. As to quaternary structure, monomer.

Its subcellular location is the cytoplasm. The catalysed reaction is an N-acyl-L-alpha-aminoacyl-tRNA + H2O = an N-acyl-L-amino acid + a tRNA + H(+). In terms of biological role, hydrolyzes ribosome-free peptidyl-tRNAs (with 1 or more amino acids incorporated), which drop off the ribosome during protein synthesis, or as a result of ribosome stalling. Catalyzes the release of premature peptidyl moieties from peptidyl-tRNA molecules trapped in stalled 50S ribosomal subunits, and thus maintains levels of free tRNAs and 50S ribosomes. This is Peptidyl-tRNA hydrolase 2 from Corynebacterium glutamicum (strain ATCC 13032 / DSM 20300 / JCM 1318 / BCRC 11384 / CCUG 27702 / LMG 3730 / NBRC 12168 / NCIMB 10025 / NRRL B-2784 / 534).